The primary structure comprises 467 residues: Transcription factor TGAL7 (467 aa).

Residues 1–10 are compositionally biased toward basic and acidic residues; sequence MGGSREEDRQ. Disordered stretches follow at residues 1–42 and 105–184; these read MGGS…KESS and QLQV…KTLR. Positions 25–41 are enriched in low complexity; it reads SSSPTTMIASSSMSKES. Polar residues predominate over residues 120–129; it reads QGGQKINSSV. Over residues 145-157 the composition is skewed to basic and acidic residues; the sequence is KDNKNSSLIKKEG. Residues 158 to 168 show a composition bias toward polar residues; it reads SSSGKGATTSN. Positions 169-182 are enriched in basic and acidic residues; it reads DPEREGRRTLDPKT. In terms of domain architecture, bZIP spans 179 to 223; the sequence is DPKTLRRLAQNREAARKSRLRKKAYIQQLESSRIRLSQLEQQVHV. Positions 181–201 are basic motif; the sequence is KTLRRLAQNREAARKSRLRKK. The interval 207-221 is leucine-zipper; sequence LESSRIRLSQLEQQV. Residues 247-458 form the DOG1 domain; the sequence is ASLFDLEYGR…RALSTLWVAR (212 aa).

It belongs to the bZIP family. As to quaternary structure, interacts with NPR5/NH4, NH5.1 and NH5.2.

The protein localises to the nucleus. Its function is as follows. Transcriptional regulator involved in defense response. The polypeptide is Transcription factor TGAL7 (Oryza sativa subsp. japonica (Rice)).